The chain runs to 560 residues: Dihydroxy-acid dehydratase (560 aa).

Residue C52 participates in [2Fe-2S] cluster binding. A Mg(2+)-binding site is contributed by D84. Residue C125 coordinates [2Fe-2S] cluster. 2 residues coordinate Mg(2+): D126 and K127. An N6-carboxylysine modification is found at K127. C197 serves as a coordination point for [2Fe-2S] cluster. E448 contributes to the Mg(2+) binding site. The Proton acceptor role is filled by S474.

This sequence belongs to the IlvD/Edd family. As to quaternary structure, homodimer. The cofactor is [2Fe-2S] cluster. It depends on Mg(2+) as a cofactor.

The catalysed reaction is (2R)-2,3-dihydroxy-3-methylbutanoate = 3-methyl-2-oxobutanoate + H2O. It catalyses the reaction (2R,3R)-2,3-dihydroxy-3-methylpentanoate = (S)-3-methyl-2-oxopentanoate + H2O. Its pathway is amino-acid biosynthesis; L-isoleucine biosynthesis; L-isoleucine from 2-oxobutanoate: step 3/4. The protein operates within amino-acid biosynthesis; L-valine biosynthesis; L-valine from pyruvate: step 3/4. Functions in the biosynthesis of branched-chain amino acids. Catalyzes the dehydration of (2R,3R)-2,3-dihydroxy-3-methylpentanoate (2,3-dihydroxy-3-methylvalerate) into 2-oxo-3-methylpentanoate (2-oxo-3-methylvalerate) and of (2R)-2,3-dihydroxy-3-methylbutanoate (2,3-dihydroxyisovalerate) into 2-oxo-3-methylbutanoate (2-oxoisovalerate), the penultimate precursor to L-isoleucine and L-valine, respectively. The chain is Dihydroxy-acid dehydratase from Leptospira borgpetersenii serovar Hardjo-bovis (strain JB197).